A 160-amino-acid polypeptide reads, in one-letter code: Endoribonuclease YbeY (160 aa).

Zn(2+)-binding residues include His-112, His-116, and His-122.

Belongs to the endoribonuclease YbeY family. Zn(2+) serves as cofactor.

It localises to the cytoplasm. Single strand-specific metallo-endoribonuclease involved in late-stage 70S ribosome quality control and in maturation of the 3' terminus of the 16S rRNA. In Maricaulis maris (strain MCS10) (Caulobacter maris), this protein is Endoribonuclease YbeY.